The following is a 458-amino-acid chain: ATP synthase subunit beta (458 aa).

148-155 is a binding site for ATP; it reads GGAGVGKT.

The protein belongs to the ATPase alpha/beta chains family. F-type ATPases have 2 components, CF(1) - the catalytic core - and CF(0) - the membrane proton channel. CF(1) has five subunits: alpha(3), beta(3), gamma(1), delta(1), epsilon(1). CF(0) has three main subunits: a(1), b(2) and c(9-12). The alpha and beta chains form an alternating ring which encloses part of the gamma chain. CF(1) is attached to CF(0) by a central stalk formed by the gamma and epsilon chains, while a peripheral stalk is formed by the delta and b chains.

It is found in the cell inner membrane. It carries out the reaction ATP + H2O + 4 H(+)(in) = ADP + phosphate + 5 H(+)(out). Its function is as follows. Produces ATP from ADP in the presence of a proton gradient across the membrane. The catalytic sites are hosted primarily by the beta subunits. The sequence is that of ATP synthase subunit beta from Shewanella pealeana (strain ATCC 700345 / ANG-SQ1).